Here is a 183-residue protein sequence, read N- to C-terminus: Peptide deformylase (183 aa).

Residues Cys-110 and His-153 each contribute to the Fe cation site. Glu-154 is an active-site residue. Residue His-157 coordinates Fe cation.

This sequence belongs to the polypeptide deformylase family. It depends on Fe(2+) as a cofactor.

The enzyme catalyses N-terminal N-formyl-L-methionyl-[peptide] + H2O = N-terminal L-methionyl-[peptide] + formate. Removes the formyl group from the N-terminal Met of newly synthesized proteins. Requires at least a dipeptide for an efficient rate of reaction. N-terminal L-methionine is a prerequisite for activity but the enzyme has broad specificity at other positions. The sequence is that of Peptide deformylase from Listeria monocytogenes serotype 4b (strain CLIP80459).